The sequence spans 606 residues: Aspartate--tRNA(Asp/Asn) ligase (606 aa).

L-aspartate is bound at residue E196. Residues 220 to 223 (QIFK) are aspartate. L-aspartate is bound at residue R242. ATP-binding positions include 242–244 (RDE) and Q251. H465 contributes to the L-aspartate binding site. E499 is an ATP binding site. R506 contacts L-aspartate. 551-554 (GMDR) contacts ATP.

The protein belongs to the class-II aminoacyl-tRNA synthetase family. Type 1 subfamily. As to quaternary structure, homodimer.

Its subcellular location is the cytoplasm. It carries out the reaction tRNA(Asx) + L-aspartate + ATP = L-aspartyl-tRNA(Asx) + AMP + diphosphate. Aspartyl-tRNA synthetase with relaxed tRNA specificity since it is able to aspartylate not only its cognate tRNA(Asp) but also tRNA(Asn). Reaction proceeds in two steps: L-aspartate is first activated by ATP to form Asp-AMP and then transferred to the acceptor end of tRNA(Asp/Asn). This is Aspartate--tRNA(Asp/Asn) ligase from Oleidesulfovibrio alaskensis (strain ATCC BAA-1058 / DSM 17464 / G20) (Desulfovibrio alaskensis).